Reading from the N-terminus, the 86-residue chain is Neuropeptide-like 2 (86 aa).

Positions 1 to 19 (MAKLAICILVFALFALALS) are cleaved as a signal peptide. 2 propeptides span residues 20–34 (ARVPREESNPAQEFL) and 45–86 (IEKL…AAST).

In terms of tissue distribution, hemolymph (at protein level).

It is found in the secreted. This chain is Neuropeptide-like 2 (Nplp2), found in Drosophila melanogaster (Fruit fly).